Here is a 405-residue protein sequence, read N- to C-terminus: L-carnitine CoA-transferase (405 aa).

2 residues coordinate CoA: lysine 97 and arginine 104. Residue aspartate 169 is the Nucleophile of the active site.

This sequence belongs to the CoA-transferase III family. CaiB subfamily. Homodimer.

It is found in the cytoplasm. It carries out the reaction crotonobetainyl-CoA + (R)-carnitine = crotonobetaine + (R)-carnitinyl-CoA. The catalysed reaction is 4-(trimethylamino)butanoyl-CoA + (R)-carnitine = (R)-carnitinyl-CoA + 4-(trimethylamino)butanoate. It functions in the pathway amine and polyamine metabolism; carnitine metabolism. Its function is as follows. Catalyzes the reversible transfer of the CoA moiety from gamma-butyrobetainyl-CoA to L-carnitine to generate L-carnitinyl-CoA and gamma-butyrobetaine. Is also able to catalyze the reversible transfer of the CoA moiety from gamma-butyrobetainyl-CoA or L-carnitinyl-CoA to crotonobetaine to generate crotonobetainyl-CoA. The polypeptide is L-carnitine CoA-transferase (Escherichia coli (strain 55989 / EAEC)).